The following is a 99-amino-acid chain: Small ribosomal subunit protein eS24 (99 aa).

The protein belongs to the eukaryotic ribosomal protein eS24 family.

The sequence is that of Small ribosomal subunit protein eS24 (rps2e) from Thermoplasma volcanium (strain ATCC 51530 / DSM 4299 / JCM 9571 / NBRC 15438 / GSS1).